We begin with the raw amino-acid sequence, 235 residues long: Phosphoribosylaminoimidazole-succinocarboxamide synthase (235 aa).

It belongs to the SAICAR synthetase family.

The enzyme catalyses 5-amino-1-(5-phospho-D-ribosyl)imidazole-4-carboxylate + L-aspartate + ATP = (2S)-2-[5-amino-1-(5-phospho-beta-D-ribosyl)imidazole-4-carboxamido]succinate + ADP + phosphate + 2 H(+). It functions in the pathway purine metabolism; IMP biosynthesis via de novo pathway; 5-amino-1-(5-phospho-D-ribosyl)imidazole-4-carboxamide from 5-amino-1-(5-phospho-D-ribosyl)imidazole-4-carboxylate: step 1/2. The protein is Phosphoribosylaminoimidazole-succinocarboxamide synthase of Clostridium kluyveri (strain NBRC 12016).